The sequence spans 637 residues: Poly [ADP-ribose] polymerase 2 (637 aa).

A DNA-binding region spans residues 1–140; sequence MANKLKVDEL…KKEEKIVTAT (140 aa). The SAP 1 domain maps to 2–36; the sequence is ANKLKVDELRLKLAERGLSTTGVKAVLVERLEEAI. Over residues 35-46 the composition is skewed to basic and acidic residues; sequence AIAEDTKKEESK. Residues 35–56 form a disordered region; the sequence is AIAEDTKKEESKSKRKRNSSND. The Nuclear localization signal signature appears at 41-62; that stretch reads KKEESKSKRKRNSSNDTYESNK. An SAP 2 domain is found at 69 to 103; the sequence is FRGMIVKELREEAIKRGLDTTGTKKDLLERLCNDA. Residues 106 to 117 show a composition bias toward polar residues; the sequence is VSNAPVKSSNGT. A disordered region spans residues 106-134; the sequence is VSNAPVKSSNGTDEAEDDNNGFEEEKKEE. The segment covering 118–127 has biased composition (acidic residues); sequence DEAEDDNNGF. One can recognise a WGR domain in the interval 158–255; sequence QYHVLQRGDD…KEFIPHPKSY (98 aa). A PARP alpha-helical domain is found at 286 to 404; it reads QSKLDTRVAK…EIELATKLLS (119 aa). Residues 412–637 enclose the PARP catalytic domain; sequence DPLYYHYQQL…VIQVKFNYKH (226 aa).

It belongs to the ARTD/PARP family.

Its subcellular location is the nucleus. It catalyses the reaction NAD(+) + (ADP-D-ribosyl)n-acceptor = nicotinamide + (ADP-D-ribosyl)n+1-acceptor + H(+).. The catalysed reaction is L-aspartyl-[protein] + NAD(+) = 4-O-(ADP-D-ribosyl)-L-aspartyl-[protein] + nicotinamide. The enzyme catalyses L-glutamyl-[protein] + NAD(+) = 5-O-(ADP-D-ribosyl)-L-glutamyl-[protein] + nicotinamide. Its function is as follows. Involved in the base excision repair (BER) pathway, by catalyzing the poly(ADP-ribosyl)ation of a limited number of acceptor proteins involved in chromatin architecture and in DNA metabolism. This modification follows DNA damages and appears as an obligatory step in a detection/signaling pathway leading to the reparation of DNA strand breaks. The chain is Poly [ADP-ribose] polymerase 2 (PARP2) from Arabidopsis thaliana (Mouse-ear cress).